The following is a 114-amino-acid chain: uncharacterized protein (114 aa).

The interval 1–24 is disordered; the sequence is MFGACYKQPLKPSGSEPPAEECRM.

In terms of tissue distribution, expressed in kidney and liver.

This is an uncharacterized protein from Homo sapiens (Human).